The sequence spans 159 residues: Transcriptional repressor NrdR (159 aa).

The segment at 3-34 is a zinc-finger region; that stretch reads CPFCGAEDTSVVDSRISEEGARIRRRRRCVEC. The ATP-cone domain maps to 49 to 139; that stretch reads PQVIKQDGNR…VYRSFEDVGD (91 aa).

Belongs to the NrdR family. The cofactor is Zn(2+).

In terms of biological role, negatively regulates transcription of bacterial ribonucleotide reductase nrd genes and operons by binding to NrdR-boxes. The polypeptide is Transcriptional repressor NrdR (Nitrosomonas europaea (strain ATCC 19718 / CIP 103999 / KCTC 2705 / NBRC 14298)).